The primary structure comprises 1854 residues: Protein virilizer (1854 aa).

Residue S186 is modified to Phosphoserine. Composition is skewed to basic and acidic residues over residues 202–214 and 236–259; these read YHQHAEEQEQREM and THSESNDREYIRCSRDKGSRDWSR. 5 disordered regions span residues 202–361, 777–821, 1570–1589, 1720–1788, and 1804–1854; these read YHQH…EIIG, NPEE…GKPV, TSTETPPEAEGEANPSASSC, VRGR…NRGS, and IGSP…SYLR. 3 positions are modified to phosphoserine: S258, S260, and S276. Positions 275-285 are enriched in basic and acidic residues; the sequence is RSRSVVDEHKW. Phosphothreonine is present on T288. S295 is modified (phosphoserine). T297 carries the post-translational modification Phosphothreonine. S301 and S312 each carry phosphoserine. Basic and acidic residues-rich tracts occupy residues 325–343 and 777–796; these read HSSESLHRGERDRDDEDRS and NPEEKEEKAEKSDAEDKAME. The stretch at 779–808 forms a coiled coil; sequence EEKEEKAEKSDAEDKAMEVENEAVEAGGEK. 2 stretches are compositionally biased toward low complexity: residues 1738–1748 and 1816–1838; these read SRPPNTSRPPS and SYRSASDSHFSSSDSHYSSPHYS.

This sequence belongs to the vir family. Component of the WMM complex, a N6-methyltransferase complex composed of a catalytic subcomplex, named MAC, and of an associated subcomplex, named MACOM. The MAC subcomplex is composed of Ime4/Mettl3 and Mettl14. The MACOM subcomplex is composed of fl(2)d, Flacc/Xio, Hakai, vir, and, in some cases of nito. Part of a complex containing fl(2)d, Sxl and vir.

It is found in the nucleus. Associated component of the WMM complex, a complex that mediates N6-methyladenosine (m6A) methylation of mRNAs, a modification that plays a role in the efficiency of mRNA splicing and is required for sex determination. Required for sex determination and dosage compensation via Sxl alternative splicing: m6A methylation acts as a key regulator of Sxl pre-mRNA and promotes female-specific alternative splicing of Sxl, which determines female physiognomy. M6A methylation is also required for neuronal functions. Required for proper inclusion of regulated exons in Ubx transcripts, leading to isoforms Ia/b and IIa/b. In Drosophila melanogaster (Fruit fly), this protein is Protein virilizer.